The following is a 709-amino-acid chain: Dual specificity calcium/calmodulin-dependent 3',5'-cyclic nucleotide phosphodiesterase 1C (709 aa).

M1 is subject to N-acetylmethionine. The interval 123–146 (EKPRFKSIVHAVQAGIFVERMYRR) is calmodulin-binding. Positions 151 to 528 (VGLSYPPAVI…ERWRAKVPKE (378 aa)) constitute a PDEase domain. Catalysis depends on H228, which acts as the Proton donor. H232, H268, D269, and D376 together coordinate Zn(2+). D269 contacts Mg(2+). 2 disordered regions span residues 453-495 (LIDE…APIN) and 523-650 (AKVP…TCRL). Residues 483 to 495 (VKTSGSEGSAPIN) are compositionally biased toward polar residues. The segment covering 523–556 (AKVPKEEKAKKEAEEKARLAAEEQQKEMEAKSQA) has biased composition (basic and acidic residues). Positions 571–581 (ETKNQVNGTRA) are enriched in polar residues. Basic and acidic residues-rich tracts occupy residues 582–598 (NKSD…EKSS) and 606–633 (DFKD…DGTK).

Belongs to the cyclic nucleotide phosphodiesterase family. PDE1 subfamily. In terms of assembly, homodimer. The cofactor is Zn(2+). Mg(2+) is required as a cofactor. Isoform PDE1C2 is present in the heart and brain and, at lower levels in the lung, liver, kidney and skeletal muscle. Isoform PDE1C1 is expressed in the heart and brain and, at lower levels in lung. Also expressed at low levels in uterus and testis.

It is found in the lysosome. The enzyme catalyses a nucleoside 3',5'-cyclic phosphate + H2O = a nucleoside 5'-phosphate + H(+). The catalysed reaction is 3',5'-cyclic GMP + H2O = GMP + H(+). It carries out the reaction 3',5'-cyclic AMP + H2O = AMP + H(+). Type I PDE are activated by the binding of calmodulin in the presence of Ca(2+). Its function is as follows. Calmodulin-dependent cyclic nucleotide phosphodiesterase with a dual specificity for the second messengers cAMP and cGMP, which are key regulators of many important physiological processes. Has a high affinity for both cAMP and cGMP. Modulates the amplitude and duration of the cAMP signal in sensory cilia in response to odorant stimulation, hence contributing to the generation of action potentials. Regulates smooth muscle cell proliferation. Regulates the stability of growth factor receptors, including PDGFRB. This Homo sapiens (Human) protein is Dual specificity calcium/calmodulin-dependent 3',5'-cyclic nucleotide phosphodiesterase 1C.